Consider the following 328-residue polypeptide: MYNFKDSVSITVVSGNGGSGCVSFLREKFNAKGGPDGGNGGSGGSVIFKVRENLRTLSFYKNGHVLCAKNGQPGMGFKRSGANGKDLILFVPPNTDIYNENDGTLLCRLENLNDEFVILKGGRGGLGNWNFKTSVRRAPRFAQPGESGNSLNVRLELFLVADIGLVGLPNAGKSSLLNRITSAKSRVANYPFTTKIPHLGILRYSYDDLIIADIPGIIKGASFGVGLGTKFLKHISKTKILALVIDISEANFLESYNILLNELKTYSYNLFYKKKIIIANKLDLDSSKKNFDCLIKALGKEKIVGISIYENKGIDELIKEFFVLAKTF.

An Obg domain is found at 2–160 (YNFKDSVSIT…LNVRLELFLV (159 aa)). Positions 161–326 (ADIGLVGLPN…LIKEFFVLAK (166 aa)) constitute an OBG-type G domain. GTP-binding positions include 167-174 (GLPNAGKS), 192-196 (FTTKI), 213-216 (DIPG), 280-283 (NKLD), and 307-309 (SIY). Mg(2+) contacts are provided by Ser174 and Thr194.

It belongs to the TRAFAC class OBG-HflX-like GTPase superfamily. OBG GTPase family. In terms of assembly, monomer. Mg(2+) serves as cofactor.

The protein localises to the cytoplasm. An essential GTPase which binds GTP, GDP and possibly (p)ppGpp with moderate affinity, with high nucleotide exchange rates and a fairly low GTP hydrolysis rate. Plays a role in control of the cell cycle, stress response, ribosome biogenesis and in those bacteria that undergo differentiation, in morphogenesis control. This Borreliella afzelii (strain PKo) (Borrelia afzelii) protein is GTPase Obg.